The sequence spans 699 residues: WIIPFVPLPVPMLIGVGLLLFPIXTNKLRRMWAFPSILLLSIVMIFSTNLSIQQINSNSIYQYVWSWTLDNDFSLELGCLIDPLTSIMSMLITIVGITVLIYSDNYMAHDQGYLRFFAYMSFFSTSMLGLVTSSNLIQIYIFWELVGVCSYLLIGFWFTRPLAANACQKAFVTNRVGDFGLLLGILGFYWITGSFEFRDLFEIFNNLIVNNQVNYLFVTLCAALLFAGAVAKSAQFPLHVWLPDAMEGPTPISALIHAATMVAEGIFLVARLLPLFIVIPYIMNFISLIGIITVLLGATLALAQKDIKRGLAYSTMSQLGYMMLALGMGSYRSALFHLITHAYSKALLFLGSGSVIHSMETIVGYSPEKSQNMVLMGGLRKYVPITKISFLLGTLSLCGIPPLACFWSKDEILNDSWLYSPIFAIIAWATAGLTAFYMFRIYLLTFEGHLNVYFQNYSGKKNTAFYSISIWGKGCSKRINKNFRLLRINNQSSSFFLKKTYRSDENLKKRNGGRPFINLIRFENKKARLYPYESDNTMLFPLLILVLFTLFVGYLGISFNQEARDLDILSKWLAPSIDLLHQKSRDLTDWYEFLKDAIFSVSIAYFGILLASLLYKPIFASFKNFDLINSFVKTGPKRSRWDKILTLLYNWSHNRAYIDVFYTTSFTGSIRGLSQLTHFFDTQVIDGITNGVGVMSFFV.

15 helical membrane passes run 1 to 21 (WIIPFVPLPVPMLIGVGLLLF), 32 to 52 (WAFPSILLLSIVMIFSTNLSI), 81 to 101 (IDPLTSIMSMLITIVGITVLI), 117 to 137 (FAYMSFFSTSMLGLVTSSNLI), 139 to 159 (IYIFWELVGVCSYLLIGFWFT), 177 to 197 (GDFGLLLGILGFYWITGSFEF), 216 to 236 (LFVTLCAALLFAGAVAKSAQF), 250 to 270 (TPISALIHAATMVAEGIFLVA), 272 to 292 (LLPLFIVIPYIMNFISLIGII), 319 to 339 (LGYMMLALGMGSYRSALFHLI), 346 to 366 (ALLFLGSGSVIHSMETIVGYS), 388 to 408 (ISFLLGTLSLCGIPPLACFWS), 417 to 437 (WLYSPIFAIIAWATAGLTAFY), 539 to 559 (LFPLLILVLFTLFVGYLGISF), and 598 to 618 (IFSVSIAYFGILLASLLYKPI).

Belongs to the complex I subunit 5 family. As to quaternary structure, NDH is composed of at least 16 different subunits, 5 of which are encoded in the nucleus.

The protein resides in the plastid. It is found in the chloroplast thylakoid membrane. It carries out the reaction a plastoquinone + NADH + (n+1) H(+)(in) = a plastoquinol + NAD(+) + n H(+)(out). It catalyses the reaction a plastoquinone + NADPH + (n+1) H(+)(in) = a plastoquinol + NADP(+) + n H(+)(out). In terms of biological role, NDH shuttles electrons from NAD(P)H:plastoquinone, via FMN and iron-sulfur (Fe-S) centers, to quinones in the photosynthetic chain and possibly in a chloroplast respiratory chain. The immediate electron acceptor for the enzyme in this species is believed to be plastoquinone. Couples the redox reaction to proton translocation, and thus conserves the redox energy in a proton gradient. The protein is NAD(P)H-quinone oxidoreductase subunit 5, chloroplastic (ndhF) of Digitalis grandiflora (Yellow foxglove).